Consider the following 492-residue polypeptide: N-succinylglutamate 5-semialdehyde dehydrogenase (492 aa).

220 to 225 (GSASTG) contacts NAD(+). Residues Glu243 and Cys277 contribute to the active site.

This sequence belongs to the aldehyde dehydrogenase family. AstD subfamily.

The catalysed reaction is N-succinyl-L-glutamate 5-semialdehyde + NAD(+) + H2O = N-succinyl-L-glutamate + NADH + 2 H(+). The protein operates within amino-acid degradation; L-arginine degradation via AST pathway; L-glutamate and succinate from L-arginine: step 4/5. Its function is as follows. Catalyzes the NAD-dependent reduction of succinylglutamate semialdehyde into succinylglutamate. The chain is N-succinylglutamate 5-semialdehyde dehydrogenase from Salmonella heidelberg (strain SL476).